The following is a 590-amino-acid chain: DNA mismatch repair protein MutL (590 aa).

Residues 335–351 (PLSSASPKLPESTTATA) show a composition bias toward polar residues. A disordered region spans residues 335–354 (PLSSASPKLPESTTATAQPH).

Belongs to the DNA mismatch repair MutL/HexB family.

In terms of biological role, this protein is involved in the repair of mismatches in DNA. It is required for dam-dependent methyl-directed DNA mismatch repair. May act as a 'molecular matchmaker', a protein that promotes the formation of a stable complex between two or more DNA-binding proteins in an ATP-dependent manner without itself being part of a final effector complex. This Dichelobacter nodosus (strain VCS1703A) protein is DNA mismatch repair protein MutL.